The chain runs to 72 residues: Translation initiation factor IF-1 (72 aa).

Residues 1-72 (MARDDVIEVD…DKGRITFRYK (72 aa)) form the S1-like domain.

This sequence belongs to the IF-1 family. In terms of assembly, component of the 30S ribosomal translation pre-initiation complex which assembles on the 30S ribosome in the order IF-2 and IF-3, IF-1 and N-formylmethionyl-tRNA(fMet); mRNA recruitment can occur at any time during PIC assembly.

It is found in the cytoplasm. Functionally, one of the essential components for the initiation of protein synthesis. Stabilizes the binding of IF-2 and IF-3 on the 30S subunit to which N-formylmethionyl-tRNA(fMet) subsequently binds. Helps modulate mRNA selection, yielding the 30S pre-initiation complex (PIC). Upon addition of the 50S ribosomal subunit IF-1, IF-2 and IF-3 are released leaving the mature 70S translation initiation complex. The polypeptide is Translation initiation factor IF-1 (Helicobacter pylori (strain HPAG1)).